A 100-amino-acid chain; its full sequence is Ubiquitin-related modifier 1 homolog (100 aa).

A 1-thioglycine modification is found at G100. G100 is covalently cross-linked (Glycyl lysine isopeptide (Gly-Lys) (interchain with K-? in acceptor proteins)).

It belongs to the URM1 family. Post-translationally, C-terminal thiocarboxylation occurs in 2 steps, it is first acyl-adenylated (-COAMP) via the hesA/moeB/thiF part of the MOCS3 homolog, then thiocarboxylated (-COSH) via the rhodanese domain of the MOCS3 homolog.

The protein resides in the cytoplasm. Its pathway is tRNA modification; 5-methoxycarbonylmethyl-2-thiouridine-tRNA biosynthesis. Functionally, acts as a sulfur carrier required for 2-thiolation of mcm(5)S(2)U at tRNA wobble positions of cytosolic tRNA(Lys), tRNA(Glu) and tRNA(Gln). Serves as sulfur donor in tRNA 2-thiolation reaction by being thiocarboxylated (-COSH) at its C-terminus by MOCS3. The sulfur is then transferred to tRNA to form 2-thiolation of mcm(5)S(2)U. Also acts as a ubiquitin-like protein (UBL) that is covalently conjugated via an isopeptide bond to lysine residues of target proteins. The thiocarboxylated form serves as substrate for conjugation and oxidative stress specifically induces the formation of UBL-protein conjugates. The sequence is that of Ubiquitin-related modifier 1 homolog from Caenorhabditis elegans.